The primary structure comprises 730 residues: Arginine decarboxylase 1B, chloroplastic (730 aa).

Residues 1-37 constitute a chloroplast transit peptide; it reads MPALGCCVDAAVSPPPGYSFLWDSSLPAPEIFPSGVP. The residue at position 157 (Lys-157) is an N6-(pyridoxal phosphate)lysine. Residues Ser-309, Gly-346, and 395–398 contribute to the pyridoxal 5'-phosphate site; that span reads ESGR. 460 to 461 serves as a coordination point for substrate; that stretch reads YA. Residue Cys-548 is the Proton donor; shared with dimeric partner of the active site. Asp-549 contacts substrate. Residue Tyr-590 participates in pyridoxal 5'-phosphate binding.

It belongs to the Orn/Lys/Arg decarboxylase class-II family. SpeA subfamily. Requires Mg(2+) as cofactor. Pyridoxal 5'-phosphate serves as cofactor.

It localises to the plastid. The protein resides in the chloroplast. The catalysed reaction is L-arginine + H(+) = agmatine + CO2. Its pathway is alkaloid biosynthesis; nicotine biosynthesis. The protein operates within amine and polyamine biosynthesis; agmatine biosynthesis; agmatine from L-arginine: step 1/1. Functionally, involved in the biosynthesis of pyridine alkaloid natural products, leading mainly to the production of anabasine, anatabine, nicotine and nornicotine, effective deterrents against herbivores with antiparasitic and pesticide properties (neurotoxins); nornicotine serves as the precursor in the synthesis of the carcinogen compound N'-nitrosonornicotine (NNN). Required for the biosynthesis of putrescine. Catalyzes the first step of polyamine (PA) biosynthesis to produce putrescine from arginine. The polypeptide is Arginine decarboxylase 1B, chloroplastic (Nicotiana tabacum (Common tobacco)).